A 274-amino-acid polypeptide reads, in one-letter code: MAPNAPFARSLRLQRLHHHDPDRLFIVPLDHSITDGPLSRAHRLDPLVGELASHHVDGIVLHKGSLRHVDPEWFTRTSLIVHLSASTVHAPDPNAKYLVSSVEESLRMGADAVSVHVNLGSEGERHQIADMAAVAEACDRWNVPLLAMMYPRGPKIDDPRDPALVAHAVQVAVDLGADLVKTLYVGSVAAMAEITAASPVPVVVVGGPRDSDESRILAYVDDALRGGAAGVAMGRNVFQAPDPGAMADKLSDLIHNSGTRGAARAPAGAAAGAA.

Belongs to the DeoC/FbaB aldolase family. GriI subfamily. As to quaternary structure, homodecamer.

It carries out the reaction 2-amino-4,5-dihydroxy-6-oxo-7-(phosphooxy)heptanoate = L-aspartate 4-semialdehyde + dihydroxyacetone phosphate. In terms of biological role, catalyzes aldol condensation between L-aspartate-4-semialdehyde (ASA) and dihydroxyacetone phosphate (DHAP), to form 2-amino-4,5-dihydroxy-6-oxo-7-(phosphonooxy)heptanoate. This is 2-amino-4,5-dihydroxy-6-oxo-7-(phosphonooxy)heptanoate synthase (griI) from Streptomyces griseus subsp. griseus (strain JCM 4626 / CBS 651.72 / NBRC 13350 / KCC S-0626 / ISP 5235).